We begin with the raw amino-acid sequence, 1086 residues long: NAD(P) transhydrogenase, mitochondrial (1086 aa).

A mitochondrion-targeting transit peptide spans 1–43; sequence MANLLKTVVTGCSCPFLSNLGSCKVLPGKKNFLRAFHTHRILW. The Mitochondrial matrix segment spans residues 44-474; that stretch reads CKAPVKPGIP…TITPFRKTMT (431 aa). The residue at position 70 (lysine 70) is an N6-acetyllysine. Lysine 117 carries the N6-succinyllysine modification. 182-184 provides a ligand contact to NAD(+); it reads RVT. Lysine 224 carries the post-translational modification N6-succinyllysine. NAD(+) contacts are provided by residues valine 237, 257 to 259, and glycine 287; that span reads DTR. The residue at position 294 (lysine 294) is an N6-succinyllysine. Glutamate 300 and leucine 319 together coordinate NAD(+). The residue at position 331 (lysine 331) is an N6-succinyllysine. N6-acetyllysine is present on lysine 397. Transmembrane regions (helical) follow at residues 475 to 493, 501 to 521, 527 to 546, and 558 to 578; these read SASV…GIAA, MVTT…GVTP, LMSV…LVLM, and GLAA…FLVT. Residues 579–595 are Mitochondrial matrix-facing; that stretch reads QRMLDMFKRPTDPPEYN. The next 5 membrane-spanning stretches (helical) occupy residues 596–616, 622–642, 646–666, 672–691, and 702–722; these read YLYL…LYSG, IMYL…STQG, LGNA…LGGL, LLAQ…LTIA, and LVAA…IAEY. At 723 to 739 the chain is on the cytoplasmic side; the sequence is IIEYPHFATDAAANLTK. A run of 5 helical transmembrane segments spans residues 740-760, 778-797, 801-819, 833-853, and 857-879; these read IVAY…LVAY, HLLN…PFMM, FTTG…AVMG, VVIT…GFLL, and LLTI…MCVA. Residues 880 to 1086 are Mitochondrial matrix-facing; it reads MNRSLANVIL…QAKVRESYQK (207 aa). NADP(+) contacts are provided by residues tyrosine 933, 965-970, 1007-1011, 1026-1027, 1042-1049, and 1068-1069; these read VAGRMP, GANDT, GM, KRSLGVGY, and DA. Residue lysine 1079 is modified to N6-succinyllysine.

The protein in the N-terminal section; belongs to the AlaDH/PNT family. In the C-terminal section; belongs to the PNT beta subunit family. As to quaternary structure, homodimer.

The protein resides in the mitochondrion inner membrane. The enzyme catalyses NAD(+) + NADPH + H(+)(in) = NADH + NADP(+) + H(+)(out). The transhydrogenation between NADH and NADP is coupled to respiration and ATP hydrolysis and functions as a proton pump across the membrane. May play a role in reactive oxygen species (ROS) detoxification in the adrenal gland. This Ovis aries (Sheep) protein is NAD(P) transhydrogenase, mitochondrial (NNT).